Here is a 760-residue protein sequence, read N- to C-terminus: DNA-directed RNA polymerase subunit beta' (760 aa).

Zn(2+) contacts are provided by cysteine 76, cysteine 78, cysteine 90, and cysteine 93. Positions 594, 596, and 598 each coordinate Mg(2+).

This sequence belongs to the RNA polymerase beta' chain family. RpoC1 subfamily. In plastids the minimal PEP RNA polymerase catalytic core is composed of four subunits: alpha, beta, beta', and beta''. When a (nuclear-encoded) sigma factor is associated with the core the holoenzyme is formed, which can initiate transcription. It depends on Mg(2+) as a cofactor. Requires Zn(2+) as cofactor.

It is found in the plastid. The protein localises to the chloroplast. The catalysed reaction is RNA(n) + a ribonucleoside 5'-triphosphate = RNA(n+1) + diphosphate. DNA-dependent RNA polymerase catalyzes the transcription of DNA into RNA using the four ribonucleoside triphosphates as substrates. This Bigelowiella natans (Pedinomonas minutissima) protein is DNA-directed RNA polymerase subunit beta'.